The primary structure comprises 579 residues: MTSVNEHSLLINNNENNDNNNNHINQRNNKNNINNRNNIGVNNNNNNNNNNNNNNINNNNNNNNNNNNNNNNNNNSNTGKIYLRKKKKWNFRKKILPMIVILIITAIVVCLVVFSLPFDSSNTIYNQSPFVIKEDDNLLELAMKSRQNLLNIHGNQTISKLDFAILVSNPIGYWQLATFNGKNNSNPQQTLFLPLLAAAVNWCMNQNNDPHCLQTAAGPMMNDMSSIHAGILMDIITDAPNQEFQTSNSTGFQSWLTKRESIELFLNSFNLLGNQTIINKFYPSNSGPTATWGEGLIQKLMGDNQMCPYDSALLMLNLVKSGILSEGQSYMTDLISRQTFSTFTSIGFGLPPGTTLHSVLGTSSSTKDLNEIAHLVLPNGGEMIFSIFSNGYENFGHAPYQSSILGNFAGDLIRSLGIDIGCPNKIVMTSQDKNCTVTGAPWTLDTSIQAYNNSFLYISGGVTPTSTVTWSFTINVTGLYEVCVWFPNGDLHTSVSYKVEPGDGMIYYFPVDQVHYGARWIRLDSFFIVAGNQPIISLSNRGIDPSKTVVADSVKLTRWPSSKGIPGFSNDFVIAESPE.

The tract at residues 1-75 is required for targeting to the plasma membrane; sequence MTSVNEHSLL…NNNNNNNNNN (75 aa). Residues 1 to 79 form a disordered region; the sequence is MTSVNEHSLL…NNNNNNSNTG (79 aa). The Lumenal segment spans residues 1–94; sequence MTSVNEHSLL…KKKKWNFRKK (94 aa). The span at 11-77 shows a compositional bias: low complexity; the sequence is INNNENNDNN…NNNNNNNNSN (67 aa). A helical; Signal-anchor for type III membrane protein membrane pass occupies residues 95-115; that stretch reads ILPMIVILIITAIVVCLVVFS. A required for membrane targeting region spans residues 95–118; the sequence is ILPMIVILIITAIVVCLVVFSLPF. Residues 116–578 are Cytoplasmic-facing; that stretch reads LPFDSSNTIY…SNDFVIAESP (463 aa). Residues 559–579 form a required for transfer to endosomes and contractile vacuoles; the protein is trapped in the Golgi region; that stretch reads WPSSKGIPGFSNDFVIAESPE.

The protein resides in the contractile vacuole membrane. The protein localises to the endosome membrane. Its subcellular location is the golgi apparatus membrane. In Dictyostelium discoideum (Social amoeba), this protein is Golvesin (gol).